Here is a 217-residue protein sequence, read N- to C-terminus: GTP cyclohydrolase 1 (217 aa).

Positions 109, 112, and 180 each coordinate Zn(2+).

The protein belongs to the GTP cyclohydrolase I family. In terms of assembly, toroid-shaped homodecamer, composed of two pentamers of five dimers.

It carries out the reaction GTP + H2O = 7,8-dihydroneopterin 3'-triphosphate + formate + H(+). The protein operates within cofactor biosynthesis; 7,8-dihydroneopterin triphosphate biosynthesis; 7,8-dihydroneopterin triphosphate from GTP: step 1/1. This chain is GTP cyclohydrolase 1, found in Vibrio parahaemolyticus serotype O3:K6 (strain RIMD 2210633).